The following is a 231-amino-acid chain: Phosphatidylserine decarboxylase proenzyme (231 aa).

Ser188 functions as the Schiff-base intermediate with substrate; via pyruvic acid in the catalytic mechanism. Ser188 bears the Pyruvic acid (Ser); by autocatalysis mark.

The protein belongs to the phosphatidylserine decarboxylase family. PSD-A subfamily. As to quaternary structure, heterodimer of a large membrane-associated beta subunit and a small pyruvoyl-containing alpha subunit. Pyruvate is required as a cofactor. In terms of processing, is synthesized initially as an inactive proenzyme. Formation of the active enzyme involves a self-maturation process in which the active site pyruvoyl group is generated from an internal serine residue via an autocatalytic post-translational modification. Two non-identical subunits are generated from the proenzyme in this reaction, and the pyruvate is formed at the N-terminus of the alpha chain, which is derived from the carboxyl end of the proenzyme. The post-translation cleavage follows an unusual pathway, termed non-hydrolytic serinolysis, in which the side chain hydroxyl group of the serine supplies its oxygen atom to form the C-terminus of the beta chain, while the remainder of the serine residue undergoes an oxidative deamination to produce ammonia and the pyruvoyl prosthetic group on the alpha chain.

The protein resides in the cell membrane. The catalysed reaction is a 1,2-diacyl-sn-glycero-3-phospho-L-serine + H(+) = a 1,2-diacyl-sn-glycero-3-phosphoethanolamine + CO2. It functions in the pathway phospholipid metabolism; phosphatidylethanolamine biosynthesis; phosphatidylethanolamine from CDP-diacylglycerol: step 2/2. Its function is as follows. Catalyzes the formation of phosphatidylethanolamine (PtdEtn) from phosphatidylserine (PtdSer). This is Phosphatidylserine decarboxylase proenzyme from Rickettsia bellii (strain OSU 85-389).